The sequence spans 419 residues: Effector protein BipC (419 aa).

2 disordered regions span residues 62 to 91 and 338 to 402; these read VAGS…TVSG and LQSG…AKSQ. 2 stretches are compositionally biased toward basic and acidic residues: residues 71 to 91 and 380 to 392; these read ELAR…TVSG and TRDE…REAA.

It belongs to the SctB/SipC family.

Its subcellular location is the secreted. This chain is Effector protein BipC (bipC), found in Burkholderia pseudomallei (strain 1106a).